A 284-amino-acid chain; its full sequence is Heat stress transcription factor B-1 (284 aa).

The DNA-binding element occupies 12–106 (PAPFLSKTYQ…LLTDIRRRKS (95 aa)). Residues 118 to 151 (VGSPSESNSGGGDDHGSSSTSSPGSSKNPGSVEN) are disordered. Over residues 134–148 (SSSTSSPGSSKNPGS) the composition is skewed to low complexity. Positions 147-192 (GSVENMVADLSGENEKLKRENNNLSSELAAAKKQRDELVTFLTGHL) are hydrophobic repeat HR-A/B. A Nuclear localization signal motif is present at residues 247–252 (RKKRDR).

The protein belongs to the HSF family. Class B subfamily. In terms of assembly, homotrimer. Post-translationally, exhibits temperature-dependent phosphorylation.

The protein localises to the nucleus. Functionally, transcriptional regulator that specifically binds DNA sequence 5'-AGAAnnTTCT-3' known as heat shock promoter elements (HSE). In Arabidopsis thaliana (Mouse-ear cress), this protein is Heat stress transcription factor B-1 (HSFB1).